We begin with the raw amino-acid sequence, 513 residues long: Putative ribose/galactose/methyl galactoside import ATP-binding protein 2 (513 aa).

ABC transporter domains follow at residues 24 to 260 (LSAE…VGRE) and 270 to 510 (VPIG…VMEL). 56–63 (GENGAGKS) contributes to the ATP binding site.

This sequence belongs to the ABC transporter superfamily. Carbohydrate importer 2 (CUT2) (TC 3.A.1.2) family.

It localises to the cell inner membrane. The catalysed reaction is D-ribose(out) + ATP + H2O = D-ribose(in) + ADP + phosphate + H(+). The enzyme catalyses D-galactose(out) + ATP + H2O = D-galactose(in) + ADP + phosphate + H(+). Part of an ABC transporter complex involved in carbohydrate import. Could be involved in ribose, galactose and/or methyl galactoside import. Responsible for energy coupling to the transport system. This is Putative ribose/galactose/methyl galactoside import ATP-binding protein 2 from Rhizobium etli (strain ATCC 51251 / DSM 11541 / JCM 21823 / NBRC 15573 / CFN 42).